A 98-amino-acid polypeptide reads, in one-letter code: MTLFSSISSMSSSMTSSRSSIASFGSGTSMGSNSIACSVGSGSCGSGSGSGGCGDLTGGAKSSGGSCGGKGGSHNHGHGHGHGPHGHGGKGSGGSCSC.

Disordered regions lie at residues 1-26 and 60-98; these read MTLF…SFGS and AKSS…SCSC. Positions 60–72 are enriched in gly residues; that stretch reads AKSSGGSCGGKGG. The segment covering 73 to 88 has biased composition (basic residues); the sequence is SHNHGHGHGHGPHGHG. The segment covering 89 to 98 has biased composition (gly residues); that stretch reads GKGSGGSCSC.

This sequence belongs to the hssA/B family.

The chain is HssA/B-like protein 34 (hssl34) from Dictyostelium discoideum (Social amoeba).